The following is a 295-amino-acid chain: Sulfotransferase 1E1 (295 aa).

Position 48–53 (48–53 (KSGSTW)) interacts with 3'-phosphoadenylyl sulfate. 106–108 (KTH) lines the substrate pocket. The active-site Proton acceptor is the His108. Residues Arg130 and Ser138 each coordinate 3'-phosphoadenylyl sulfate. Ser156 is modified (phosphoserine). 3'-phosphoadenylyl sulfate-binding positions include Tyr193, 227 to 232 (TSFQEM), and 257 to 259 (RKG).

Belongs to the sulfotransferase 1 family. Homodimer. Liver of young mature males and uterus.

The protein resides in the cytoplasm. Its subcellular location is the cytosol. It carries out the reaction estrone + 3'-phosphoadenylyl sulfate = estrone 3-sulfate + adenosine 3',5'-bisphosphate + H(+). The catalysed reaction is (24S)-hydroxycholesterol + 3'-phosphoadenylyl sulfate = (24S)-hydroxycholesterol 3-sulfate + adenosine 3',5'-bisphosphate + H(+). The enzyme catalyses 17beta-estradiol + 3'-phosphoadenylyl sulfate = 17beta-estradiol 3-sulfate + adenosine 3',5'-bisphosphate + H(+). It catalyses the reaction 3beta-hydroxyandrost-5-en-17-one + 3'-phosphoadenylyl sulfate = dehydroepiandrosterone 3-sulfate + adenosine 3',5'-bisphosphate + H(+). It carries out the reaction 4-ethylphenol + 3'-phosphoadenylyl sulfate = 4-ethylphenyl sulfate + adenosine 3',5'-bisphosphate + H(+). Its activity is regulated as follows. Inhibited by estradiol. Functionally, sulfotransferase that utilizes 3'-phospho-5'-adenylyl sulfate (PAPS) as sulfonate donor to catalyze the sulfate conjugation of estradiol and estrone. Is a key enzyme in estrogen homeostasis, the sulfation of estrogens leads to their inactivation. Also sulfates dehydroepiandrosterone (DHEA), pregnenolone, (24S)-hydroxycholesterol and xenobiotic compounds like ethinylestradiol, equalenin, diethyl stilbesterol and 1-naphthol at significantly lower efficiency. Does not sulfonate cortisol, testosterone and dopamine. May play a role in gut microbiota-host metabolic interaction. O-sulfonates 4-ethylphenol (4-EP), a dietary tyrosine-derived metabolite produced by gut bacteria. The product 4-EPS crosses the blood-brain barrier and may negatively regulate oligodendrocyte maturation and myelination, affecting the functional connectivity of different brain regions associated with the limbic system. In Rattus norvegicus (Rat), this protein is Sulfotransferase 1E1.